The sequence spans 515 residues: Bifunctional purine biosynthesis protein PurH (515 aa).

Residues 1–145 form the MGS-like domain; that stretch reads MTKRVLISVS…KNHASVTVVV (145 aa).

This sequence belongs to the PurH family.

It carries out the reaction (6R)-10-formyltetrahydrofolate + 5-amino-1-(5-phospho-beta-D-ribosyl)imidazole-4-carboxamide = 5-formamido-1-(5-phospho-D-ribosyl)imidazole-4-carboxamide + (6S)-5,6,7,8-tetrahydrofolate. It catalyses the reaction IMP + H2O = 5-formamido-1-(5-phospho-D-ribosyl)imidazole-4-carboxamide. It functions in the pathway purine metabolism; IMP biosynthesis via de novo pathway; 5-formamido-1-(5-phospho-D-ribosyl)imidazole-4-carboxamide from 5-amino-1-(5-phospho-D-ribosyl)imidazole-4-carboxamide (10-formyl THF route): step 1/1. Its pathway is purine metabolism; IMP biosynthesis via de novo pathway; IMP from 5-formamido-1-(5-phospho-D-ribosyl)imidazole-4-carboxamide: step 1/1. The sequence is that of Bifunctional purine biosynthesis protein PurH from Streptococcus pneumoniae (strain JJA).